The primary structure comprises 176 residues: Ribosome rescue factor SmrB (176 aa).

The Smr domain occupies 97–172 (LDMHGMTQQE…GDGALLVLLS (76 aa)).

The protein belongs to the SmrB family. Associates with collided ribosomes, but not with correctly translating polysomes.

Acts as a ribosome collision sensor. Detects stalled/collided disomes (pairs of ribosomes where the leading ribosome is stalled and a second ribosome has collided with it) and endonucleolytically cleaves mRNA at the 5' boundary of the stalled ribosome. Stalled/collided disomes form a new interface (primarily via the 30S subunits) that binds SmrB. Cleaved mRNA becomes available for tmRNA ligation, leading to ribosomal subunit dissociation and rescue of stalled ribosomes. The sequence is that of Ribosome rescue factor SmrB from Vibrio vulnificus (strain CMCP6).